A 104-amino-acid polypeptide reads, in one-letter code: DNA-directed RNA polymerase subunit omega (104 aa).

It belongs to the RNA polymerase subunit omega family. As to quaternary structure, the RNAP catalytic core consists of 2 alpha, 1 beta, 1 beta' and 1 omega subunit. When a sigma factor is associated with the core the holoenzyme is formed, which can initiate transcription.

It carries out the reaction RNA(n) + a ribonucleoside 5'-triphosphate = RNA(n+1) + diphosphate. Functionally, promotes RNA polymerase assembly. Latches the N- and C-terminal regions of the beta' subunit thereby facilitating its interaction with the beta and alpha subunits. In Streptococcus pyogenes serotype M1, this protein is DNA-directed RNA polymerase subunit omega (rpoZ).